Consider the following 161-residue polypeptide: Phosphopantetheine adenylyltransferase (161 aa).

Substrate is bound at residue Thr-9. ATP contacts are provided by residues 9 to 10 (TF) and His-17. Substrate contacts are provided by Lys-41, Leu-73, and Arg-87. ATP contacts are provided by residues 88–90 (GLR), Glu-98, and 123–129 (YQFISGT).

Belongs to the bacterial CoaD family. Homohexamer. Requires Mg(2+) as cofactor.

Its subcellular location is the cytoplasm. It catalyses the reaction (R)-4'-phosphopantetheine + ATP + H(+) = 3'-dephospho-CoA + diphosphate. It participates in cofactor biosynthesis; coenzyme A biosynthesis; CoA from (R)-pantothenate: step 4/5. Its function is as follows. Reversibly transfers an adenylyl group from ATP to 4'-phosphopantetheine, yielding dephospho-CoA (dPCoA) and pyrophosphate. The polypeptide is Phosphopantetheine adenylyltransferase (Janthinobacterium sp. (strain Marseille) (Minibacterium massiliensis)).